Consider the following 119-residue polypeptide: MTIDTSNEVKAIARYIRMSPLKVRRVLDQIRGRSYREALIILEFMPYRACDPILKVLRSAVANAEHNEGLDPATLVVSQAFADGGPTLKRFRPRAQGRAYQIRKPTCHITVAVAPSNKD.

This sequence belongs to the universal ribosomal protein uL22 family. In terms of assembly, part of the 50S ribosomal subunit.

Its function is as follows. This protein binds specifically to 23S rRNA; its binding is stimulated by other ribosomal proteins, e.g. L4, L17, and L20. It is important during the early stages of 50S assembly. It makes multiple contacts with different domains of the 23S rRNA in the assembled 50S subunit and ribosome. Functionally, the globular domain of the protein is located near the polypeptide exit tunnel on the outside of the subunit, while an extended beta-hairpin is found that lines the wall of the exit tunnel in the center of the 70S ribosome. The protein is Large ribosomal subunit protein uL22 of Microcystis aeruginosa (strain NIES-843 / IAM M-2473).